A 396-amino-acid chain; its full sequence is Elongation factor Tu (396 aa).

The tr-type G domain occupies 10-206; that stretch reads KPHVNVGTIG…AMDEYIPTPE (197 aa). Residues 19–26 form a G1 region; the sequence is GHVDHGKT. GTP is bound at residue 19–26; that stretch reads GHVDHGKT. Thr-26 is a Mg(2+) binding site. The segment at 60–64 is G2; the sequence is GITIA. Positions 81–84 are G3; it reads DCPG. Residues 81–85 and 136–139 contribute to the GTP site; these read DCPGH and NKAD. The segment at 136–139 is G4; it reads NKAD. Residues 174 to 176 form a G5 region; it reads SAL.

It belongs to the TRAFAC class translation factor GTPase superfamily. Classic translation factor GTPase family. EF-Tu/EF-1A subfamily. As to quaternary structure, monomer.

The protein resides in the cytoplasm. The catalysed reaction is GTP + H2O = GDP + phosphate + H(+). In terms of biological role, GTP hydrolase that promotes the GTP-dependent binding of aminoacyl-tRNA to the A-site of ribosomes during protein biosynthesis. The chain is Elongation factor Tu from Alkalilimnicola ehrlichii (strain ATCC BAA-1101 / DSM 17681 / MLHE-1).